Here is a 116-residue protein sequence, read N- to C-terminus: ATP-dependent Clp protease adapter protein ClpS (116 aa).

A compositionally biased stretch (polar residues) spans 1 to 11 (MRRFNTIMQGK). The interval 1-23 (MRRFNTIMQGKTNGGNGPESGTV) is disordered.

The protein belongs to the ClpS family. Binds to the N-terminal domain of the chaperone ClpA.

In terms of biological role, involved in the modulation of the specificity of the ClpAP-mediated ATP-dependent protein degradation. This Brucella melitensis biotype 2 (strain ATCC 23457) protein is ATP-dependent Clp protease adapter protein ClpS.